Here is a 1106-residue protein sequence, read N- to C-terminus: Protein shuttle craft (1106 aa).

Disordered regions lie at residues Gln-7–Asp-26 and Pro-189–Gln-371. Over residues Pro-189–Ser-201 the composition is skewed to low complexity. Composition is skewed to basic and acidic residues over residues Asn-232–Arg-270 and Arg-278–Ile-323. A Phosphothreonine modification is found at Thr-335. 4 positions are modified to phosphoserine: Ser-336, Ser-339, Ser-343, and Ser-354. The segment covering Ser-336 to Ser-354 has biased composition (polar residues). The RING-type; atypical zinc finger occupies Cys-386–Gln-433. 8 consecutive NF-X1-type zinc fingers follow at residues Cys-474 to Ala-492, Cys-527 to Glu-546, Cys-585 to Leu-604, Cys-644 to Lys-667, Cys-706 to Leu-725, Cys-733 to Arg-752, Cys-844 to Gln-867, and Cys-876 to Glu-896. An R3H domain is found at Thr-1006–Lys-1071.

Belongs to the NFX1 family. In terms of tissue distribution, ovaries and embryonic central nervous system.

The protein localises to the nucleus. Functionally, plays an essential role during the late stages of embryonic neurogenesis. May either fine-tune the guidance or the spatial maintenance of the migrating SNB and in nerve roots, which are composed of axons originating from distinct groups of motor neurons and may be required to either guide or maintain the position of these nerves along a direct and straight path to their ultimate targets in particular muscle fields. May play a role in egg chamber development and/or may confer essential maternal contributions to the early embryo. This is Protein shuttle craft (stc) from Drosophila melanogaster (Fruit fly).